Reading from the N-terminus, the 482-residue chain is tRNA sulfurtransferase (482 aa).

The region spanning 61–165 is the THUMP domain; sequence LAIRDALTRI…DDRLLLIKGR (105 aa). Residues 183–184, K265, G287, and Q296 contribute to the ATP site; that span reads LI. A disulfide bridge connects residues C344 and C456. The Rhodanese domain maps to 404–482; the sequence is FGPNDVILDI…GFNNVKVYRP (79 aa). C456 (cysteine persulfide intermediate) is an active-site residue.

Belongs to the ThiI family.

Its subcellular location is the cytoplasm. It carries out the reaction [ThiI sulfur-carrier protein]-S-sulfanyl-L-cysteine + a uridine in tRNA + 2 reduced [2Fe-2S]-[ferredoxin] + ATP + H(+) = [ThiI sulfur-carrier protein]-L-cysteine + a 4-thiouridine in tRNA + 2 oxidized [2Fe-2S]-[ferredoxin] + AMP + diphosphate. The catalysed reaction is [ThiS sulfur-carrier protein]-C-terminal Gly-Gly-AMP + S-sulfanyl-L-cysteinyl-[cysteine desulfurase] + AH2 = [ThiS sulfur-carrier protein]-C-terminal-Gly-aminoethanethioate + L-cysteinyl-[cysteine desulfurase] + A + AMP + 2 H(+). It functions in the pathway cofactor biosynthesis; thiamine diphosphate biosynthesis. Its function is as follows. Catalyzes the ATP-dependent transfer of a sulfur to tRNA to produce 4-thiouridine in position 8 of tRNAs, which functions as a near-UV photosensor. Also catalyzes the transfer of sulfur to the sulfur carrier protein ThiS, forming ThiS-thiocarboxylate. This is a step in the synthesis of thiazole, in the thiamine biosynthesis pathway. The sulfur is donated as persulfide by IscS. In Escherichia coli (strain K12 / MC4100 / BW2952), this protein is tRNA sulfurtransferase.